The chain runs to 151 residues: Nucleoside diphosphate kinase (151 aa).

Residues Lys9, Phe57, Arg86, Thr92, Arg103, and Asn113 each coordinate ATP. His116 acts as the Pros-phosphohistidine intermediate in catalysis.

Belongs to the NDK family. In terms of assembly, homotetramer. Requires Mg(2+) as cofactor.

It localises to the cytoplasm. The catalysed reaction is a 2'-deoxyribonucleoside 5'-diphosphate + ATP = a 2'-deoxyribonucleoside 5'-triphosphate + ADP. It catalyses the reaction a ribonucleoside 5'-diphosphate + ATP = a ribonucleoside 5'-triphosphate + ADP. Functionally, major role in the synthesis of nucleoside triphosphates other than ATP. The ATP gamma phosphate is transferred to the NDP beta phosphate via a ping-pong mechanism, using a phosphorylated active-site intermediate. The protein is Nucleoside diphosphate kinase of Chloroflexus aurantiacus (strain ATCC 29364 / DSM 637 / Y-400-fl).